The following is a 326-amino-acid chain: Beta-ketoacyl-[acyl-carrier-protein] synthase III (326 aa).

Residues cysteine 112 and histidine 251 contribute to the active site. Positions 252 to 256 are ACP-binding; it reads QANSR. Residue asparagine 281 is part of the active site.

It belongs to the thiolase-like superfamily. FabH family. Homodimer.

Its subcellular location is the cytoplasm. The enzyme catalyses malonyl-[ACP] + acetyl-CoA + H(+) = 3-oxobutanoyl-[ACP] + CO2 + CoA. It participates in lipid metabolism; fatty acid biosynthesis. In terms of biological role, catalyzes the condensation reaction of fatty acid synthesis by the addition to an acyl acceptor of two carbons from malonyl-ACP. Catalyzes the first condensation reaction which initiates fatty acid synthesis and may therefore play a role in governing the total rate of fatty acid production. Possesses both acetoacetyl-ACP synthase and acetyl transacylase activities. Its substrate specificity determines the biosynthesis of branched-chain and/or straight-chain of fatty acids. This chain is Beta-ketoacyl-[acyl-carrier-protein] synthase III, found in Clostridium botulinum (strain Loch Maree / Type A3).